Consider the following 283-residue polypeptide: Shikimate dehydrogenase (NADP(+)) (283 aa).

Residues 16-18 and Thr-63 contribute to the shikimate site; that span reads SLS. Lys-67 acts as the Proton acceptor in catalysis. Asp-79 serves as a coordination point for NADP(+). Shikimate contacts are provided by Asn-88 and Asp-103. Residues 128–132 and Gly-243 contribute to the NADP(+) site; that span reads GAGGA.

This sequence belongs to the shikimate dehydrogenase family. Homodimer.

It carries out the reaction shikimate + NADP(+) = 3-dehydroshikimate + NADPH + H(+). It participates in metabolic intermediate biosynthesis; chorismate biosynthesis; chorismate from D-erythrose 4-phosphate and phosphoenolpyruvate: step 4/7. Involved in the biosynthesis of the chorismate, which leads to the biosynthesis of aromatic amino acids. Catalyzes the reversible NADPH linked reduction of 3-dehydroshikimate (DHSA) to yield shikimate (SA). The polypeptide is Shikimate dehydrogenase (NADP(+)) (Xanthomonas euvesicatoria pv. vesicatoria (strain 85-10) (Xanthomonas campestris pv. vesicatoria)).